Reading from the N-terminus, the 478-residue chain is Zinc metalloproteinase/disintegrin (478 aa).

An N-terminal signal peptide occupies residues 1 to 20 (MIQVLLVTICLAVFPYQGSS). Positions 21–194 (KTLKSGNVND…KASQLNLTPE (174 aa)) are excised as a propeptide. Position 195 is a pyrrolidone carboxylic acid (glutamine 195). The 197-residue stretch at 201 to 397 (RYIELVIVAD…RNPQCILNQP (197 aa)) folds into the Peptidase M12B domain. 2 residues coordinate Ca(2+): glutamate 204 and aspartate 288. 3 disulfide bridges follow: cysteine 312/cysteine 392, cysteine 352/cysteine 376, and cysteine 354/cysteine 359. Residue histidine 337 coordinates Zn(2+). Glutamate 338 is a catalytic residue. Residues histidine 341 and histidine 347 each coordinate Zn(2+). Ca(2+) contacts are provided by cysteine 392 and asparagine 395. The propeptide occupies 398-413 (LRTDTVSTPVSGNELL). Residues 405 to 478 (TPVSGNELLQ…SDCPRNPYKD (74 aa)) enclose the Disintegrin domain. Cystine bridges form between cysteine 420–cysteine 443, cysteine 434–cysteine 440, cysteine 439–cysteine 464, and cysteine 452–cysteine 471. A Cell attachment site; atypical (VGD) motif is present at residues 456–458 (VGD).

It belongs to the venom metalloproteinase (M12B) family. P-II subfamily. P-IIe sub-subfamily. Monomer (metalloproteinase). Heterodimer; disulfide-linked (disintegrin). Zn(2+) serves as cofactor. In terms of tissue distribution, expressed by the venom gland.

The protein localises to the secreted. Fibrinolytic and caseinolytic activities are inhibited by Cd(2+), Cu(2+) and Co(2+) ions. Not inhibited by Mg(2+), Ca(2+) and Ba(2+). Also inhibited by EDTA, EGTA and 1,10-phenanthroline. Its function is as follows. Fibrinolytic and fibrinogenolytic metalloproteinase that hydrolyzes the Aalpha-chain and more slowly the Bbeta-chain of fibrin and fibrinogen. Its fibrinolytic activity is direct, without any plasminogen activation. Also hydrolyzes casein and B-chain of oxidized insulin. Inhibits ADP-induced and collagen-induced platelet aggregation. Shows low hemorrhagic activity. Cleaves the plasma proteinase inhibitors alpha(2)-macroglobulin (A2M) and pregnancy zone protein (PZP), and is inhibited by them. The metalloprotease has no strict P1-P1' specificity requirement. Hydrolysis at sites with a Pro residue at P1 is observed with bradykinin, substance P, PZP and alpha chain fibrinogen (FGA). Functionally, poor inhibitor of platelet aggregation. The disintegrin inhibits the adhesion of the alpha-4/beta-1 (ITGA4/ITGB1) integrin to VCAM-1. Inhibition on alpha-2b/beta-3 (ITGA2B/ITGB3) is low. This chain is Zinc metalloproteinase/disintegrin, found in Macrovipera lebetinus (Levantine viper).